Reading from the N-terminus, the 431-residue chain is CinA-like protein (431 aa).

This sequence belongs to the CinA family.

The polypeptide is CinA-like protein (Chlorobium luteolum (strain DSM 273 / BCRC 81028 / 2530) (Pelodictyon luteolum)).